Reading from the N-terminus, the 243-residue chain is R-spondin-2 (243 aa).

Residues 1-21 form the signal peptide; it reads MQFQLFSFALIILNCVDYSHC. 11 cysteine pairs are disulfide-bonded: Cys40/Cys46, Cys43/Cys52, Cys55/Cys74, Cys78/Cys93, Cys96/Cys104, Cys101/Cys110, Cys113/Cys124, Cys128/Cys141, Cys145/Cys187, Cys156/Cys163, and Cys196/Cys203. An FU repeat occupies 90 to 134; that stretch reads MNRCSRCRIENCDSCFSRDFCIKCKSGFYSLKGQCFEECPEGFAP. The 61-residue stretch at 144–204 folds into the TSP type-1 domain; the sequence is GCEVGPWSEW…RCKMAIRHCP (61 aa). The N-linked (GlcNAc...) asparagine glycan is linked to Asn160. Residues 204-224 are compositionally biased toward basic residues; sequence PGGKRTTKKKDKRNKKKKKKL. The tract at residues 204 to 243 is disordered; the sequence is PGGKRTTKKKDKRNKKKKKKLLERAQEQHSVVLATDRSSQ.

It belongs to the R-spondin family. As to quaternary structure, binds heparin.

The protein resides in the secreted. Activator of the canonical Wnt signaling pathway by acting as a ligand for lgr4-6 receptors. Upon binding to lgr4-6 (lgr4, lgr5 or lgr6), lgr4-6 associate with phosphorylated lrp6 and frizzled receptors that are activated by extracellular Wnt receptors, triggering the canonical Wnt signaling pathway to increase expression of target genes. Acts both in the canonical Wnt/beta-catenin-dependent pathway and in non-canonical Wnt signaling pathway. Activates neural markers and promotes muscle formation. Overexpression blocks activin, nodal and BMP4 signaling, suggesting that it may negatively regulate the TGF-beta pathway. During embryonic development, plays a crucial role in limb specification, amplifying the Wnt signaling pathway independently of LGR4-6 receptors, possibly by acting as a direct antagonistic ligand to RNF43 and ZNRF3, hence governing the number of limbs an embryo should form. The chain is R-spondin-2 (rspo2) from Xenopus laevis (African clawed frog).